Reading from the N-terminus, the 401-residue chain is MMGLGNGRRSMKSPPLVLAALVACIIVLGFNYWIASSRSVDLQTRIMELEGRVRRAAAERGAVELKKNEFQGELEKQREQLDKIQSSHNFQLESVNKLYQDEKAVLVNNITTGERLIRVLQDQLKTLQRNYGRLQQDVLQFQKNQTNLERKFSYDLSQCINQMKEVKEQCEERIEEVTKKGNEAVASRDLSENNDQRQQLQALSEPQPRLQAAGLPHTEVPQGKGNVLGNSKSQTPAPSSEVVLDSKRQVEKEETNEIQVVNEEPQRDRLPQEPGREQVVEDRPVGGRGFGGAGELGQTPQVQAALSVSQENPEMEGPERDQLVIPDGQEEEQEAAGEGRNQQKLRGEDDYNMDENEAESETDKQAALAGNDRNIDVFNVEDQKRDTINLLDQREKRNHTL.

The residue at position 1 (methionine 1) is an N-acetylmethionine. At 1–12 (MMGLGNGRRSMK) the chain is on the cytoplasmic side. The chain crosses the membrane as a helical; Signal-anchor for type II membrane protein span at residues 13 to 35 (SPPLVLAALVACIIVLGFNYWIA). Residues 36–401 (SSRSVDLQTR…DQREKRNHTL (366 aa)) are Lumenal-facing. A coiled-coil region spans residues 40-205 (VDLQTRIMEL…QRQQLQALSE (166 aa)). N-linked (GlcNAc...) (complex) asparagine glycosylation occurs at asparagine 109. N-linked (GlcNAc...) asparagine glycosylation occurs at asparagine 144. The interval 178–401 (TKKGNEAVAS…DQREKRNHTL (224 aa)) is disordered. Serine 187 is modified (phosphoserine). The span at 228-238 (LGNSKSQTPAP) shows a compositional bias: polar residues. Composition is skewed to basic and acidic residues over residues 244–255 (LDSKRQVEKEET) and 264–285 (EPQRDRLPQEPGREQVVEDRPV). Over residues 286–295 (GGRGFGGAGE) the composition is skewed to gly residues. Positions 298 to 312 (QTPQVQAALSVSQEN) are enriched in polar residues. Phosphoserine; by FAM20C is present on serine 309. The segment covering 350 to 360 (DYNMDENEAES) has biased composition (acidic residues). Residues 381–395 (EDQKRDTINLLDQRE) are compositionally biased toward basic and acidic residues. N-linked (GlcNAc...) asparagine glycosylation is present at asparagine 398.

Belongs to the GOLM family. As to quaternary structure, interacts with DYM. Glycosylated. Post-translationally, phosphorylation sites are present in the extracellular medium. In terms of tissue distribution, widely expressed. Highly expressed in colon, prostate, trachea and stomach. Expressed at lower level in testis, muscle, lymphoid tissues, white blood cells and spleen. Predominantly expressed by cells of the epithelial lineage. Expressed at low level in normal liver. Expression significantly increases in virus (HBV, HCV) infected liver. Expression does not increase in liver disease due to non-viral causes (alcohol-induced liver disease, autoimmune hepatitis). Increased expression in hepatocytes appears to be a general feature of advanced liver disease. In liver tissue from patients with adult giant-cell hepatitis (GCH), it is strongly expressed in hepatocytes-derived syncytial giant cells. Constitutively expressed by biliary epithelial cells but not by hepatocytes.

The protein localises to the golgi apparatus. It localises to the cis-Golgi network membrane. Its function is as follows. Unknown. Cellular response protein to viral infection. The sequence is that of Golgi membrane protein 1 (GOLM1) from Homo sapiens (Human).